Consider the following 370-residue polypeptide: Glutamate 5-kinase (370 aa).

Residue Lys13 coordinates ATP. Residues Ser52, Asp139, and Asn151 each contribute to the substrate site. ATP is bound by residues 171 to 172 and 211 to 217; these read SD and SGGMKSK. The 79-residue stretch at 275 to 353 folds into the PUA domain; the sequence is KGELVLDRGA…AEIEAVLGYR (79 aa).

It belongs to the glutamate 5-kinase family.

It localises to the cytoplasm. The catalysed reaction is L-glutamate + ATP = L-glutamyl 5-phosphate + ADP. It participates in amino-acid biosynthesis; L-proline biosynthesis; L-glutamate 5-semialdehyde from L-glutamate: step 1/2. In terms of biological role, catalyzes the transfer of a phosphate group to glutamate to form L-glutamate 5-phosphate. The chain is Glutamate 5-kinase from Thermus thermophilus (strain ATCC BAA-163 / DSM 7039 / HB27).